The primary structure comprises 197 residues: MFGCLVAGRLVQTAAQQVAEDKFVFDLPDYENINHVVVFMLGTVPFPEGMGGSVYFSYPDSNGMPVWQLLGFVTNGKPSAIFKISGLKSGEGSQHPFGTMNIVRTPSVAQIGISVELLDSLAQQTPVGNAAVSSVDSFTQFTQKMLDNFYNFASSFAVSQAQMTPSPSEMFIPANVVLKWYENFQRRLAQNPLFWKT.

The interval 18–55 is required for F-X-F-G repeats-nucleoporins recognition and nuclear import; sequence VAEDKFVFDLPDYENINHVVVFMLGTVPFPEGMGGSVY. The segment at 124-134 is flexible linker region involved in nuclear import of HSP70 proteins; it reads QTPVGNAAVSS.

The protein belongs to the OPI10 family. In terms of assembly, forms an asymmetric homodimer; required for binding and nuclear import of HSP70 proteins. Interacts with ATP-bound HSP70 proteins. Interacts with NUP62 and NUP153 (via F-X-F-G repeats). Interacts with HSPA8.

It is found in the cytoplasm. The protein localises to the cytosol. Its subcellular location is the nucleus. Functionally, acts as a specific nuclear import carrier for HSP70 proteins following heat-shock stress: acts by mediating the nucleoporin-dependent translocation of ATP-bound HSP70 proteins into the nucleus. HSP70 proteins import is required to protect cells from heat shock damages. Does not translocate ADP-bound HSP70 proteins into the nucleus. In Bos taurus (Bovine), this protein is Protein Hikeshi.